A 95-amino-acid chain; its full sequence is Feather keratin B-4 (95 aa).

Ser1 is modified (N-acetylserine).

The protein belongs to the avian keratin family. The avian keratins (F-ker, S-ker, C-ker and B-ker) are a complex mixture of very similar polypeptides.

The chain is Feather keratin B-4 from Columba livia (Rock dove).